A 495-amino-acid polypeptide reads, in one-letter code: Protein nucleotidyltransferase YdiU (495 aa).

ATP contacts are provided by Gly-92, Gly-94, Arg-95, Lys-114, Asp-126, Gly-127, Arg-177, and Arg-184. Asp-261 acts as the Proton acceptor in catalysis. The Mg(2+) site is built by Asn-262 and Asp-271. Asp-271 contacts ATP.

The protein belongs to the SELO family. Mg(2+) serves as cofactor. The cofactor is Mn(2+).

It catalyses the reaction L-seryl-[protein] + ATP = 3-O-(5'-adenylyl)-L-seryl-[protein] + diphosphate. The enzyme catalyses L-threonyl-[protein] + ATP = 3-O-(5'-adenylyl)-L-threonyl-[protein] + diphosphate. The catalysed reaction is L-tyrosyl-[protein] + ATP = O-(5'-adenylyl)-L-tyrosyl-[protein] + diphosphate. It carries out the reaction L-histidyl-[protein] + UTP = N(tele)-(5'-uridylyl)-L-histidyl-[protein] + diphosphate. It catalyses the reaction L-seryl-[protein] + UTP = O-(5'-uridylyl)-L-seryl-[protein] + diphosphate. The enzyme catalyses L-tyrosyl-[protein] + UTP = O-(5'-uridylyl)-L-tyrosyl-[protein] + diphosphate. In terms of biological role, nucleotidyltransferase involved in the post-translational modification of proteins. It can catalyze the addition of adenosine monophosphate (AMP) or uridine monophosphate (UMP) to a protein, resulting in modifications known as AMPylation and UMPylation. In Bordetella bronchiseptica (strain ATCC BAA-588 / NCTC 13252 / RB50) (Alcaligenes bronchisepticus), this protein is Protein nucleotidyltransferase YdiU.